The primary structure comprises 442 residues: D-serine dehydratase (442 aa).

Position 118 is an N6-(pyridoxal phosphate)lysine (Lys-118).

Belongs to the serine/threonine dehydratase family. DsdA subfamily. In terms of assembly, monomer. Pyridoxal 5'-phosphate is required as a cofactor.

The enzyme catalyses D-serine = pyruvate + NH4(+). This is D-serine dehydratase from Escherichia coli O81 (strain ED1a).